We begin with the raw amino-acid sequence, 274 residues long: MSYSRERLQRAQEAMGIAAKKSLGQNFLVSDTVINRIIDQVKAFAPEELVEVGPGPGALTDLLLELNLPLQLIELDSAIAAYWREKGLTVIEQDALRLDWKQFYTGKRVVFVSNLPYQISSSIVIERSLENEGVAAMVLMFQKEVAQKIRGTVDSDLYGLLSVYAQAFWKIETVTDAGPRDFQPPPKVASRVLSFERIESEVKNRKAFLTFVKCAFAQRRKLLKKNLSGLLSQKKLTEEQMVGWLAELGFKETARAEELSPKQFVALYKHFGFE.

S-adenosyl-L-methionine-binding residues include N26, L28, G53, E74, D94, and N114.

Belongs to the class I-like SAM-binding methyltransferase superfamily. rRNA adenine N(6)-methyltransferase family. RsmA subfamily.

The protein localises to the cytoplasm. The enzyme catalyses adenosine(1518)/adenosine(1519) in 16S rRNA + 4 S-adenosyl-L-methionine = N(6)-dimethyladenosine(1518)/N(6)-dimethyladenosine(1519) in 16S rRNA + 4 S-adenosyl-L-homocysteine + 4 H(+). In terms of biological role, specifically dimethylates two adjacent adenosines (A1518 and A1519) in the loop of a conserved hairpin near the 3'-end of 16S rRNA in the 30S particle. May play a critical role in biogenesis of 30S subunits. This chain is Ribosomal RNA small subunit methyltransferase A, found in Bdellovibrio bacteriovorus (strain ATCC 15356 / DSM 50701 / NCIMB 9529 / HD100).